The chain runs to 222 residues: Octanoyltransferase (222 aa).

One can recognise a BPL/LPL catalytic domain in the interval 34-214 (GEAPSTVLLL…EFRKHEEALV (181 aa)). Substrate contacts are provided by residues 72–79 (RGGKLTWH), 144–146 (AIG), and 157–159 (GVA). The active-site Acyl-thioester intermediate is the cysteine 175.

This sequence belongs to the LipB family.

The protein localises to the cytoplasm. It carries out the reaction octanoyl-[ACP] + L-lysyl-[protein] = N(6)-octanoyl-L-lysyl-[protein] + holo-[ACP] + H(+). Its pathway is protein modification; protein lipoylation via endogenous pathway; protein N(6)-(lipoyl)lysine from octanoyl-[acyl-carrier-protein]: step 1/2. Functionally, catalyzes the transfer of endogenously produced octanoic acid from octanoyl-acyl-carrier-protein onto the lipoyl domains of lipoate-dependent enzymes. Lipoyl-ACP can also act as a substrate although octanoyl-ACP is likely to be the physiological substrate. This Pseudarthrobacter chlorophenolicus (strain ATCC 700700 / DSM 12829 / CIP 107037 / JCM 12360 / KCTC 9906 / NCIMB 13794 / A6) (Arthrobacter chlorophenolicus) protein is Octanoyltransferase.